A 408-amino-acid chain; its full sequence is Putative ankyrin repeat protein L483 (408 aa).

ANK repeat units lie at residues 78–107 (SLNK…DIKA), 108–137 (GDDC…NIRA), 139–167 (NDYA…DIRA), 168–197 (NNDY…NIRT), 198–227 (ENDY…DIRA), 229–257 (NDYA…NIRV), 259–287 (NDYA…NIRA), 288–317 (RCDF…DIRS), 318–347 (QNDY…DIRT), 349–377 (DDYA…NIRA), and 378–407 (KDDY…VLTK).

The chain is Putative ankyrin repeat protein L483 from Acanthamoeba polyphaga (Amoeba).